Reading from the N-terminus, the 132-residue chain is Small ribosomal subunit protein uS8 (132 aa).

Belongs to the universal ribosomal protein uS8 family. Part of the 30S ribosomal subunit. Contacts proteins S5 and S12.

Its function is as follows. One of the primary rRNA binding proteins, it binds directly to 16S rRNA central domain where it helps coordinate assembly of the platform of the 30S subunit. This Rhizobium rhizogenes (strain K84 / ATCC BAA-868) (Agrobacterium radiobacter) protein is Small ribosomal subunit protein uS8.